The primary structure comprises 309 residues: Olfactory receptor 1L8 (309 aa).

Residues 1-26 lie on the Extracellular side of the membrane; sequence MERINHTSSVSEFILLGLSSRPEDQK. Asn5 carries an N-linked (GlcNAc...) asparagine glycan. Residues 27–50 form a helical membrane-spanning segment; that stretch reads TLFVLFLIVYLVTITGNLLIILAI. The Cytoplasmic portion of the chain corresponds to 51 to 58; the sequence is RFNPHLQT. Residues 59–80 traverse the membrane as a helical segment; that stretch reads PMYFFLSFLSLTDICFTTSVVP. Residues 81–101 are Extracellular-facing; sequence KMLMNFLSEKKTISYAGCLTQ. A disulfide bridge links Cys98 with Cys190. Residues 102–121 traverse the membrane as a helical segment; sequence MYFLYALGNSDSCLLAVMAF. Over 122-140 the chain is Cytoplasmic; the sequence is DRYVAVCDPFHYVTTMSHH. The chain crosses the membrane as a helical span at residues 141–159; it reads HCVLLVAFSCSFPHLHSLL. The Extracellular segment spans residues 160-197; that stretch reads HTLLLNRLTFCDSNVIHHFLCDLSPVLKLSCSSIFVNE. Residues 198-220 form a helical membrane-spanning segment; sequence IVQMTEAPIVLVTRFLCIAFSYI. At 221 to 237 the chain is on the cytoplasmic side; it reads RILTTVLKIPSTSGKRK. The chain crosses the membrane as a helical span at residues 238-260; it reads AFSTCGFYLTVVTLFYGSIFCVY. Residues 261–272 lie on the Extracellular side of the membrane; that stretch reads LQPPSTYAVKDH. Residues 273 to 292 traverse the membrane as a helical segment; it reads VATIVYTVLSSMLNPFIYSL. The Cytoplasmic portion of the chain corresponds to 293–309; the sequence is RNKDLKQGLRKLMSKRS.

This sequence belongs to the G-protein coupled receptor 1 family.

Its subcellular location is the cell membrane. Functionally, odorant receptor. This Homo sapiens (Human) protein is Olfactory receptor 1L8 (OR1L8).